We begin with the raw amino-acid sequence, 149 residues long: Nucleoside diphosphate kinase 1 (149 aa).

Lysine 9, phenylalanine 57, arginine 85, threonine 91, arginine 102, and asparagine 112 together coordinate ATP. The active-site Pros-phosphohistidine intermediate is the histidine 115.

It belongs to the NDK family. Homohexamer. Can also form dodecamers. Requires Mg(2+) as cofactor.

It is found in the nucleus. The enzyme catalyses a 2'-deoxyribonucleoside 5'-diphosphate + ATP = a 2'-deoxyribonucleoside 5'-triphosphate + ADP. The catalysed reaction is a ribonucleoside 5'-diphosphate + ATP = a ribonucleoside 5'-triphosphate + ADP. Major role in the synthesis of nucleoside triphosphates other than ATP. The ATP gamma phosphate is transferred to the NDP beta phosphate via a ping-pong mechanism, using a phosphorylated active-site intermediate. Involved in transcription regulation. Has G-quadruplex (G4) DNA-binding activity, which is independent of its nucleotide-binding and kinase activity. Binds folded G4 with low nanomolar affinity and corresponding unfolded G-rich DNA more weakly. Stabilizes folded G4s regardless of whether they are prefolded or not. This Zea mays (Maize) protein is Nucleoside diphosphate kinase 1.